The primary structure comprises 246 residues: Ly6/PLAUR domain-containing protein 4 (246 aa).

Positions 1 to 26 are cleaved as a signal peptide; sequence MILQAWRSLQLLYLLEAISLLPCTEA. An N-linked (GlcNAc...) asparagine glycan is attached at N117. Positions 142 to 223 constitute a UPAR/Ly6 domain; it reads CPSCVGKHDQ…INVLDKSEAV (82 aa). Residue A225 is the site of GPI-anchor amidated alanine attachment. Positions 226-246 are cleaved as a propeptide — removed in mature form; it reads GHCSQGISWSVLLCLLILLRD.

Its subcellular location is the cell membrane. This Mus musculus (Mouse) protein is Ly6/PLAUR domain-containing protein 4 (Lypd4).